A 304-amino-acid chain; its full sequence is MVKLQYLLSILLYAYSCTALMLDRRDPTPGQLSQVTDFGDNPTNVGFYIYVPQNLASNPAIIVAIHYCTGTAQAYYSGTPYAQYAETYGFIVIYPESPYSGTCWDVSSQSTLTHNGGGNSNSIANMVDWTINQYNADASRVYVTGTSSGAMMTNVMAATYPNLFAAGIAYAGVPAGCFYSEANVEDQWNSTCAQGQSISTPEHWAQIAQAMYSGYEGSRPKMQIYHGSADATLYPQNYYETCKQWAGVFGYNYDSPQEVQNDTPVAGWAKTIWGENLQGILADGVGHNIQIQGEEDLKWFGFTS.

Residues Met1–Ala19 form the signal peptide. The Charge relay system role is filled by Ser147. An N-linked (GlcNAc...) asparagine glycan is attached at Asn189.

This sequence belongs to the carbohydrate esterase 1 (CE1) family. AxeA subfamily. As to quaternary structure, monomer.

The protein localises to the secreted. The enzyme catalyses Deacetylation of xylans and xylo-oligosaccharides.. The protein operates within glycan degradation; xylan degradation. Its function is as follows. Acetylxylan esterase involved in the hydrolysis of xylan, a major structural heterogeneous polysaccharide found in plant biomass representing the second most abundant polysaccharide in the biosphere, after cellulose. Degrades acetylated xylans by cleaving acetyl side groups from the hetero-xylan backbone. The protein is Acetylxylan esterase A (axeA) of Emericella nidulans (strain FGSC A4 / ATCC 38163 / CBS 112.46 / NRRL 194 / M139) (Aspergillus nidulans).